A 307-amino-acid chain; its full sequence is Methionyl-tRNA formyltransferase (307 aa).

108–111 is a (6S)-5,6,7,8-tetrahydrofolate binding site; sequence SLLP.

It belongs to the Fmt family.

It carries out the reaction L-methionyl-tRNA(fMet) + (6R)-10-formyltetrahydrofolate = N-formyl-L-methionyl-tRNA(fMet) + (6S)-5,6,7,8-tetrahydrofolate + H(+). In terms of biological role, attaches a formyl group to the free amino group of methionyl-tRNA(fMet). The formyl group appears to play a dual role in the initiator identity of N-formylmethionyl-tRNA by promoting its recognition by IF2 and preventing the misappropriation of this tRNA by the elongation apparatus. This is Methionyl-tRNA formyltransferase from Stenotrophomonas maltophilia (strain R551-3).